The primary structure comprises 199 residues: Recombination protein RecR (199 aa).

The C4-type zinc-finger motif lies at 58 to 73; it reads CQRCNNFSEEAVCQRC. In terms of domain architecture, Toprim spans 81-176; that stretch reads ATLCVVEMPA…KVSRISRGVP (96 aa).

The protein belongs to the RecR family.

May play a role in DNA repair. It seems to be involved in an RecBC-independent recombinational process of DNA repair. It may act with RecF and RecO. In Azoarcus sp. (strain BH72), this protein is Recombination protein RecR.